Here is a 373-residue protein sequence, read N- to C-terminus: S-adenosylmethionine:tRNA ribosyltransferase-isomerase (373 aa).

The protein belongs to the QueA family. In terms of assembly, monomer.

The protein resides in the cytoplasm. The enzyme catalyses 7-aminomethyl-7-carbaguanosine(34) in tRNA + S-adenosyl-L-methionine = epoxyqueuosine(34) in tRNA + adenine + L-methionine + 2 H(+). The protein operates within tRNA modification; tRNA-queuosine biosynthesis. Transfers and isomerizes the ribose moiety from AdoMet to the 7-aminomethyl group of 7-deazaguanine (preQ1-tRNA) to give epoxyqueuosine (oQ-tRNA). The protein is S-adenosylmethionine:tRNA ribosyltransferase-isomerase of Rhizobium etli (strain CIAT 652).